A 232-amino-acid chain; its full sequence is Lipopolysaccharide core heptose(II) kinase WaaY (232 aa).

Belongs to the protein kinase superfamily. RfaY/WaaY family.

It carries out the reaction alpha-D-Glc-(1-&gt;3)-[L-alpha-D-Hep-(1-&gt;7)]-L-alpha-D-Hep-(1-&gt;3)-4-O-PO3(2-)-L-alpha-D-Hep-(1-&gt;5)-[alpha-Kdo-(2-&gt;4)]-alpha-Kdo-(2-&gt;6)-lipid A + ATP = alpha-D-Glc-(1-&gt;3)-[L-alpha-D-Hep-(1-&gt;7)]-4-O-PO3(2-)-L-alpha-D-Hep-(1-&gt;3)-4-O-PO3(2-)-L-alpha-D-Hep-(1-&gt;5)-[alpha-Kdo-(2-&gt;4)]-alpha-Kdo-(2-&gt;6)-lipid A + ADP + H(+). It participates in bacterial outer membrane biogenesis; LPS core biosynthesis. Functionally, kinase involved in the biosynthesis of the core oligosaccharide region of lipopolysaccharide (LPS). Catalyzes the phosphorylation of the second heptose unit (HepII) of the inner core. This chain is Lipopolysaccharide core heptose(II) kinase WaaY, found in Escherichia coli (strain K12).